The following is a 405-amino-acid chain: MSVKRGRHLFTSESVTEGHPDKICDQISDAILDEILKKDPNARVACETSVTTGLVLVAGEITTNTYVDIPSVVRQTIKGIGYTRAKYGFDAETCAVLTSIDEQSADIAQGVDKALEAREGQMTDAEIEAIGAGDQGLMFGFATNETEELMPLPISLSHKLSRRLTEVRKNGTLGYLRPDGKTQVTIEYDENDTPVRVDTIVLSTQHAPEVTLEQIQADLKEHVIEAVVPSALIDEETKYFINPTGRFVIGGPQGDAGLTGRKIIVDTYGGYARHGGGAFSGKDATKVDRSGAYAARYVAKNIVAAGLADKCEVQLAYAIGVAQPVSIAVNTFGTGKAAEDVLVELVRKHFDLRPAGIIRMLDLRRPIYKQTAAYGHFGRTDVPLPWEATDKAAALKEDVLKLEAN.

Residue H19 participates in ATP binding. D21 provides a ligand contact to Mg(2+). Position 47 (E47) interacts with K(+). L-methionine contacts are provided by E60 and Q103. The flexible loop stretch occupies residues 103 to 113; the sequence is QSADIAQGVDK. ATP-binding positions include 179 to 181, 246 to 247, D255, 261 to 262, A278, and K282; these read DGK, RF, and RK. Residue D255 participates in L-methionine binding. K286 provides a ligand contact to L-methionine.

It belongs to the AdoMet synthase family. As to quaternary structure, homotetramer; dimer of dimers. Mg(2+) serves as cofactor. It depends on K(+) as a cofactor.

The protein localises to the cytoplasm. It catalyses the reaction L-methionine + ATP + H2O = S-adenosyl-L-methionine + phosphate + diphosphate. It functions in the pathway amino-acid biosynthesis; S-adenosyl-L-methionine biosynthesis; S-adenosyl-L-methionine from L-methionine: step 1/1. Catalyzes the formation of S-adenosylmethionine (AdoMet) from methionine and ATP. The overall synthetic reaction is composed of two sequential steps, AdoMet formation and the subsequent tripolyphosphate hydrolysis which occurs prior to release of AdoMet from the enzyme. The chain is S-adenosylmethionine synthase from Shouchella clausii (strain KSM-K16) (Alkalihalobacillus clausii).